The chain runs to 115 residues: Large ribosomal subunit protein bL19 (115 aa).

Belongs to the bacterial ribosomal protein bL19 family.

Its function is as follows. This protein is located at the 30S-50S ribosomal subunit interface and may play a role in the structure and function of the aminoacyl-tRNA binding site. This Buchnera aphidicola subsp. Acyrthosiphon pisum (strain Tuc7) protein is Large ribosomal subunit protein bL19.